The primary structure comprises 338 residues: tRNA N6-adenosine threonylcarbamoyltransferase (338 aa).

The Fe cation site is built by His-111 and His-115. Substrate is bound by residues 134–138 (LVSGG), Asp-167, Gly-180, and Asn-272. Asp-300 is a Fe cation binding site.

Belongs to the KAE1 / TsaD family. The cofactor is Fe(2+).

The protein resides in the cytoplasm. The catalysed reaction is L-threonylcarbamoyladenylate + adenosine(37) in tRNA = N(6)-L-threonylcarbamoyladenosine(37) in tRNA + AMP + H(+). In terms of biological role, required for the formation of a threonylcarbamoyl group on adenosine at position 37 (t(6)A37) in tRNAs that read codons beginning with adenine. Is involved in the transfer of the threonylcarbamoyl moiety of threonylcarbamoyl-AMP (TC-AMP) to the N6 group of A37, together with TsaE and TsaB. TsaD likely plays a direct catalytic role in this reaction. The chain is tRNA N6-adenosine threonylcarbamoyltransferase from Shewanella baltica (strain OS223).